The sequence spans 72 residues: Translation initiation factor IF-1 (72 aa).

The S1-like domain occupies 1 to 72 (MSKDDVIQMQ…SRARIVFRAK (72 aa)).

The protein belongs to the IF-1 family. In terms of assembly, component of the 30S ribosomal translation pre-initiation complex which assembles on the 30S ribosome in the order IF-2 and IF-3, IF-1 and N-formylmethionyl-tRNA(fMet); mRNA recruitment can occur at any time during PIC assembly.

It is found in the cytoplasm. In terms of biological role, one of the essential components for the initiation of protein synthesis. Stabilizes the binding of IF-2 and IF-3 on the 30S subunit to which N-formylmethionyl-tRNA(fMet) subsequently binds. Helps modulate mRNA selection, yielding the 30S pre-initiation complex (PIC). Upon addition of the 50S ribosomal subunit IF-1, IF-2 and IF-3 are released leaving the mature 70S translation initiation complex. The protein is Translation initiation factor IF-1 of Albidiferax ferrireducens (strain ATCC BAA-621 / DSM 15236 / T118) (Rhodoferax ferrireducens).